The primary structure comprises 378 residues: Ribosomal RNA large subunit methyltransferase G (378 aa).

This sequence belongs to the methyltransferase superfamily. RlmG family.

The protein resides in the cytoplasm. It carries out the reaction guanosine(1835) in 23S rRNA + S-adenosyl-L-methionine = N(2)-methylguanosine(1835) in 23S rRNA + S-adenosyl-L-homocysteine + H(+). Its function is as follows. Specifically methylates the guanine in position 1835 (m2G1835) of 23S rRNA. This Enterobacter sp. (strain 638) protein is Ribosomal RNA large subunit methyltransferase G.